Consider the following 366-residue polypeptide: MITLQRTPLFDVYAKYGGKTIDFGGWELPVQFSSIKEEHEAVRTAAGLFDVSHMGEVEVKGVDSLAFLQRVVTNDVSTLKVGGAQYTAMCYENGGTVDDLLIYKRGEEDYLLVINASNIEKDYEWLASHVIGDATVVNVSSEVAQLAIQGPKAEGILQKVVSEDLKEIKFFKFKKDILVDGIPALVSRTGYTGEDGFEIYCKSEDAAKLWEKLLEVGAEEGLKACGLGARDTLRFEATLPLYGQELSKDITPIEAGIGFAVKTNKEADFFGKATLKEQKENGAPRKLVGIEVIERGIPRTHYPVFIGEEKIGEVTSGTQSPTLKKSIGLALIDVKYAAVDTEVEIEIRNKRVKAVVVPTPFYKRSK.

This sequence belongs to the GcvT family. As to quaternary structure, the glycine cleavage system is composed of four proteins: P, T, L and H.

The catalysed reaction is N(6)-[(R)-S(8)-aminomethyldihydrolipoyl]-L-lysyl-[protein] + (6S)-5,6,7,8-tetrahydrofolate = N(6)-[(R)-dihydrolipoyl]-L-lysyl-[protein] + (6R)-5,10-methylene-5,6,7,8-tetrahydrofolate + NH4(+). Functionally, the glycine cleavage system catalyzes the degradation of glycine. This chain is Aminomethyltransferase, found in Bacillus cereus (strain B4264).